The following is a 119-amino-acid chain: Aspartate 1-decarboxylase (119 aa).

The active-site Schiff-base intermediate with substrate; via pyruvic acid is the S25. Residue S25 is modified to Pyruvic acid (Ser). Substrate is bound at residue T57. The active-site Proton donor is Y58. Residue 73-75 (GAA) coordinates substrate.

It belongs to the PanD family. Heterooctamer of four alpha and four beta subunits. It depends on pyruvate as a cofactor. In terms of processing, is synthesized initially as an inactive proenzyme, which is activated by self-cleavage at a specific serine bond to produce a beta-subunit with a hydroxyl group at its C-terminus and an alpha-subunit with a pyruvoyl group at its N-terminus.

It localises to the cytoplasm. It catalyses the reaction L-aspartate + H(+) = beta-alanine + CO2. The protein operates within cofactor biosynthesis; (R)-pantothenate biosynthesis; beta-alanine from L-aspartate: step 1/1. In terms of biological role, catalyzes the pyruvoyl-dependent decarboxylation of aspartate to produce beta-alanine. The polypeptide is Aspartate 1-decarboxylase (Herminiimonas arsenicoxydans).